Consider the following 249-residue polypeptide: uncharacterized protein (249 aa).

The first 20 residues, M1 to A20, serve as a signal peptide directing secretion.

This sequence belongs to the IIV-6 117L family.

This is an uncharacterized protein from Acheta domesticus (House cricket).